Reading from the N-terminus, the 656-residue chain is UV-damage endonuclease (656 aa).

7 disordered regions span residues 1–82 (MPSR…GKEQ), 119–146 (PSVV…KEPV), 175–194 (IIEP…RPPA), 241–264 (PLQF…EPQD), 492–515 (EPCD…TLPP), 550–620 (DMVP…GPYN), and 636–656 (KREV…EFDG). A compositionally biased stretch (low complexity) spans 13–32 (TPQSESSTFSSTLDSSAPSP). Basic and acidic residues-rich tracts occupy residues 48 to 82 (SEKD…GKEQ) and 135 to 146 (TNAEEREAKEPV). Residues 550-561 (DMVPYDRDDENR) show a composition bias toward basic and acidic residues. Positions 568-579 (APKKKKGGKRKR) are enriched in basic residues. Residues 583-595 (EEAAEPEEVDTAA) are compositionally biased toward acidic residues. Residues 596–614 (DDVKDAPEGPKEVPEEERA) are compositionally biased toward basic and acidic residues. Positions 647–656 (EVEDEGEFDG) are enriched in acidic residues.

Belongs to the uve1/UvsE family. The cofactor is Mg(2+).

In terms of biological role, endonuclease for the repair of UV-irradiated DNA. Involved in the excision of cyclobutane pyrimidine dimers (CPD) and 6-4 pyrimidine pyrimidones (6-4PP) which forms the UV damage repair (UVDR) pathway. This chain is UV-damage endonuclease (mus-18), found in Neurospora crassa (strain ATCC 24698 / 74-OR23-1A / CBS 708.71 / DSM 1257 / FGSC 987).